Consider the following 336-residue polypeptide: Dihydroorotate dehydrogenase (quinone) (336 aa).

Residues 62 to 66 (AGLDK) and Thr86 contribute to the FMN site. Lys66 contacts substrate. 111-115 (NRMGF) contributes to the substrate binding site. FMN is bound by residues Asn139 and Asn172. Asn172 contacts substrate. Residue Ser175 is the Nucleophile of the active site. A substrate-binding site is contributed by Asn177. Residues Lys217 and Thr245 each coordinate FMN. Residue 246–247 (NT) coordinates substrate. FMN-binding positions include Gly268, Gly297, and 318 to 319 (YS).

The protein belongs to the dihydroorotate dehydrogenase family. Type 2 subfamily. Monomer. It depends on FMN as a cofactor.

The protein resides in the cell membrane. The catalysed reaction is (S)-dihydroorotate + a quinone = orotate + a quinol. It participates in pyrimidine metabolism; UMP biosynthesis via de novo pathway; orotate from (S)-dihydroorotate (quinone route): step 1/1. Its function is as follows. Catalyzes the conversion of dihydroorotate to orotate with quinone as electron acceptor. This Salmonella choleraesuis (strain SC-B67) protein is Dihydroorotate dehydrogenase (quinone).